We begin with the raw amino-acid sequence, 291 residues long: N-acetylmannosamine kinase (291 aa).

Residues 5 to 12 and 132 to 139 each bind ATP; these read AIDIGGTK and GVGGGVVC. Residues H156, C166, C168, and C173 each contribute to the Zn(2+) site.

This sequence belongs to the ROK (NagC/XylR) family. NanK subfamily. As to quaternary structure, homodimer.

The catalysed reaction is an N-acyl-D-mannosamine + ATP = an N-acyl-D-mannosamine 6-phosphate + ADP + H(+). Its pathway is amino-sugar metabolism; N-acetylneuraminate degradation; D-fructose 6-phosphate from N-acetylneuraminate: step 2/5. Catalyzes the phosphorylation of N-acetylmannosamine (ManNAc) to ManNAc-6-P. This is N-acetylmannosamine kinase from Salmonella agona (strain SL483).